Consider the following 669-residue polypeptide: MASYTPKNILITGAAGFIASHVANRLIRSYPDYKIVVLDKLDYCSNLKNLNPSKHSPNFKFVKGDIASADLVNHLLITEGIDTIMHFAAQTHVDNSFGNSFEFTKNNIYGTHVLLEACKVTGQIRRFIHVSTDEVYGETDEDALVGNHEASQLLPTNPYSATKAGAEMLVMAYGRSYGLPVITTRGNNVYGPNQFPEKLIPKFILLAMRGQVLPIHGDGSNVRSYLYCEDVAEAFEVVLHKGEVGHVYNIGTKKERRVNDVAKDICKLFNMDPEANIKFVDNRPFNDQRYFLDDQKLKKLGWSERTTWEEGLKKTMDWYTQNPEWWGDVSGALLPHPRMLMMPGGRHFDGSEDNSLAATLSEKPSQTHMVVPSQRSNGTPQKPSLKFLIYGKTGWIGGLLGKICDKQGIAYEYGKGRLEDRSSLLQDIQSVKPTHVFNSAGVTGRPNVDWCESHKTETIRANVAGTLTLADVCREHGLLMMNFATGCIFEYDDKHPEGSGIGFKEEDTPNFTGSFYSKTKAMVEELLKEYDNVCTLRVRMPISSDLNNPRNFITKISRYNKVVNIPNSMTVLDELLPISIEMAKRNLKGIWNFTNPGVVSHNEILEMYRDYINPEFKWANFTLEEQAKVIVAPRSNNEMDASKLKKEFPELLSIKESLIKYAYGPNKKT.

13–19 is a binding site for NAD(+); the sequence is GAAGFIA. A substrate-binding site is contributed by Thr132. The Proton donor role is filled by Asp133. Active-site proton acceptor residues include Glu134 and Tyr159. Residue 391 to 397 coordinates NADP(+); it reads GKTGWIG.

It in the N-terminal section; belongs to the NAD(P)-dependent epimerase/dehydratase family. dTDP-glucose dehydratase subfamily. The protein in the C-terminal section; belongs to the dTDP-4-dehydrorhamnose reductase family. Requires NAD(+) as cofactor. NADP(+) is required as a cofactor. As to expression, expressed in roots, stems, leaves, seedlings, inflorescence tips, and siliques. Detected in the adaxial side of cotyledons, in the emerging leaves and in trichomes. Also detected in the root tip, more precisely in the epidermal cells in the meristematic and elongation zone.

The protein resides in the cytoplasm. It localises to the cytosol. It catalyses the reaction UDP-alpha-D-glucose = UDP-4-dehydro-6-deoxy-alpha-D-glucose + H2O. It functions in the pathway carbohydrate biosynthesis. Trifunctional enzyme involved in UDP-beta-L-rhamnose biosynthesis, a precursor of the primary cell wall components rhamnogalacturonan I (RG-I) and rhamnogalacturonan II (RG-II). Plays a major role in supplying UDP-rhamnose for flavonol biosynthesis. Catalyzes the dehydration of UDP-glucose to form UDP-4-dehydro-6-deoxy-D-glucose followed by the epimerization of the C3' and C5' positions of UDP-4-dehydro-6-deoxy-D-glucose to form UDP-4-keto-beta-L-rhamnose and the reduction of UDP-4-keto-beta-L-rhamnose to yield UDP-beta-L-rhamnose. The sequence is that of Trifunctional UDP-glucose 4,6-dehydratase/UDP-4-keto-6-deoxy-D-glucose 3,5-epimerase/UDP-4-keto-L-rhamnose-reductase RHM1 from Arabidopsis thaliana (Mouse-ear cress).